Consider the following 444-residue polypeptide: Tryptophan 5-hydroxylase 1 (444 aa).

The ACT domain occupies Thr19–Gln94. Ser58 is modified (phosphoserine; by PKA). L-tryptophan contacts are provided by Tyr235, Arg257, and Thr265. Fe cation-binding residues include His272, His277, and Glu317. Residues Ser336 and Ile366 each coordinate L-tryptophan.

This sequence belongs to the biopterin-dependent aromatic amino acid hydroxylase family. In terms of assembly, homotetramer. Interacts with DNAJC12. Requires Fe(2+) as cofactor. In terms of processing, ubiquitinated, leading to its degradation by the proteasome. Ubiquitinated is triggered by phosphorylation. Post-translationally, phosphorylated; triggering degradation by the proteasome.

The enzyme catalyses (6R)-L-erythro-5,6,7,8-tetrahydrobiopterin + L-tryptophan + O2 = 5-hydroxy-L-tryptophan + (4aS,6R)-4a-hydroxy-L-erythro-5,6,7,8-tetrahydrobiopterin. The protein operates within aromatic compound metabolism; serotonin biosynthesis; serotonin from L-tryptophan: step 1/2. In terms of biological role, oxidizes L-tryptophan to 5-hydroxy-l-tryptophan in the rate-determining step of serotonin biosynthesis. In Rattus norvegicus (Rat), this protein is Tryptophan 5-hydroxylase 1 (Tph1).